The primary structure comprises 270 residues: Glutamate racemase (270 aa).

Substrate is bound by residues 10–11 (DS) and 42–43 (YG). C74 acts as the Proton donor/acceptor in catalysis. Residue 75–76 (NT) coordinates substrate. C189 acts as the Proton donor/acceptor in catalysis. Substrate is bound at residue 190–191 (TH).

It belongs to the aspartate/glutamate racemases family.

The catalysed reaction is L-glutamate = D-glutamate. It functions in the pathway cell wall biogenesis; peptidoglycan biosynthesis. In terms of biological role, provides the (R)-glutamate required for cell wall biosynthesis. This Bartonella henselae (strain ATCC 49882 / DSM 28221 / CCUG 30454 / Houston 1) (Rochalimaea henselae) protein is Glutamate racemase.